Reading from the N-terminus, the 508-residue chain is UBX domain-containing protein 4 (508 aa).

The segment at 1-200 (MLWFQGAIPA…PAEDLNIRVE (200 aa)) is interaction with UBQLN1. Residues 1–413 (MLWFQGAIPA…VHSSSGDIWT (413 aa)) lie on the Cytoplasmic side of the membrane. Polar residues-rich tracts occupy residues 117–151 (SETSVANGSQSESSVSTPSASFEPNNTCENSQSRN) and 160–187 (TSDTKSDTATGGESAGHATSSQEPSGCS). The tract at residues 117 to 196 (SETSVANGSQ…SDQRPAEDLN (80 aa)) is disordered. Residues 315 to 393 (ERSTVARIQF…ELAPSASVVV (79 aa)) enclose the UBX domain. Residues 414–434 (LLGTVLYPFLAIWRLISNFLF) lie within the membrane without spanning it. At 435–508 (SNPPPTQTSV…TWNGNSTQQM (74 aa)) the chain is on the cytoplasmic side. Positions 440 to 508 (TQTSVRVTSS…TWNGNSTQQM (69 aa)) are disordered. Residues 441 to 458 (QTSVRVTSSEPPNPASSS) are compositionally biased toward polar residues. The segment covering 459-491 (KSEKREPVRKRVLEKRGDDFKKEGKIYRLRTQD) has biased composition (basic and acidic residues). Phosphothreonine is present on threonine 489. Over residues 498 to 508 (NTWNGNSTQQM) the composition is skewed to polar residues.

In terms of assembly, directly interacts with VCP. Interacts with UBQLN1. Forms a complex with VCP and UBQLN1.

The protein localises to the endoplasmic reticulum membrane. Its subcellular location is the nucleus envelope. Involved in endoplasmic reticulum-associated protein degradation (ERAD). Acts as a platform to recruit both UBQLN1 and VCP to the ER during ERAD. The polypeptide is UBX domain-containing protein 4 (UBXN4) (Pongo abelii (Sumatran orangutan)).